We begin with the raw amino-acid sequence, 343 residues long: N-acetyl-gamma-glutamyl-phosphate reductase (343 aa).

The active site involves C147.

It belongs to the NAGSA dehydrogenase family. Type 1 subfamily.

Its subcellular location is the cytoplasm. It catalyses the reaction N-acetyl-L-glutamate 5-semialdehyde + phosphate + NADP(+) = N-acetyl-L-glutamyl 5-phosphate + NADPH + H(+). It functions in the pathway amino-acid biosynthesis; L-arginine biosynthesis; N(2)-acetyl-L-ornithine from L-glutamate: step 3/4. Functionally, catalyzes the NADPH-dependent reduction of N-acetyl-5-glutamyl phosphate to yield N-acetyl-L-glutamate 5-semialdehyde. The protein is N-acetyl-gamma-glutamyl-phosphate reductase of Staphylococcus saprophyticus subsp. saprophyticus (strain ATCC 15305 / DSM 20229 / NCIMB 8711 / NCTC 7292 / S-41).